Consider the following 131-residue polypeptide: Global transcriptional regulator Spx 1 (131 aa).

Cys-10 and Cys-13 are disulfide-bonded.

Belongs to the ArsC family. Spx subfamily. As to quaternary structure, interacts with the C-terminal domain of the alpha subunit of the RNAP.

The protein resides in the cytoplasm. Global transcriptional regulator that plays a key role in stress response and exerts either positive or negative regulation of genes. Acts by interacting with the C-terminal domain of the alpha subunit of the RNA polymerase (RNAP). This interaction can enhance binding of RNAP to the promoter region of target genes and stimulate their transcription, or block interaction of RNAP with activator. The chain is Global transcriptional regulator Spx 1 from Oceanobacillus iheyensis (strain DSM 14371 / CIP 107618 / JCM 11309 / KCTC 3954 / HTE831).